Reading from the N-terminus, the 430-residue chain is Adenylosuccinate synthetase (430 aa).

GTP contacts are provided by residues 12–18 and 40–42; these read GDEGKGK and GHT. The active-site Proton acceptor is the aspartate 13. 2 residues coordinate Mg(2+): aspartate 13 and glycine 40. IMP is bound by residues 13 to 16, 38 to 41, threonine 128, arginine 142, glutamine 223, threonine 238, and arginine 302; these read DEGK and NAGH. The Proton donor role is filled by histidine 41. Position 298–304 (298–304) interacts with substrate; it reads TTTGRPR. Residues arginine 304, 330 to 332, and 413 to 415 each bind GTP; these read SID and SVG.

Belongs to the adenylosuccinate synthetase family. Homodimer. Requires Mg(2+) as cofactor.

It is found in the cytoplasm. It catalyses the reaction IMP + L-aspartate + GTP = N(6)-(1,2-dicarboxyethyl)-AMP + GDP + phosphate + 2 H(+). The protein operates within purine metabolism; AMP biosynthesis via de novo pathway; AMP from IMP: step 1/2. In terms of biological role, plays an important role in the de novo pathway of purine nucleotide biosynthesis. Catalyzes the first committed step in the biosynthesis of AMP from IMP. The polypeptide is Adenylosuccinate synthetase (Lactococcus lactis subsp. lactis (strain IL1403) (Streptococcus lactis)).